A 91-amino-acid chain; its full sequence is Probable Fe(2+)-trafficking protein (91 aa).

The protein belongs to the Fe(2+)-trafficking protein family. In terms of assembly, monomer.

In terms of biological role, could be a mediator in iron transactions between iron acquisition and iron-requiring processes, such as synthesis and/or repair of Fe-S clusters in biosynthetic enzymes. The polypeptide is Probable Fe(2+)-trafficking protein (Escherichia coli O6:H1 (strain CFT073 / ATCC 700928 / UPEC)).